The chain runs to 59 residues: MAVPKKRTSKSKKKIRETVWREKANQARIKAFSLAQSILTGRSKSFYYTTTEKDSNLSE.

The protein belongs to the bacterial ribosomal protein bL32 family.

It is found in the plastid. It localises to the chloroplast. In Physcomitrium patens (Spreading-leaved earth moss), this protein is Large ribosomal subunit protein bL32c.